We begin with the raw amino-acid sequence, 168 residues long: MHNKRIDASQLELKEQVVDIKRVTKVVKGGRNFRFSALVIVGDENGYVGVGSGKAMEIPDAIRKGIEDAKKNLIHVPIVGTTVPHETIGIFGAGNVLIMPAKEGTGIIAGGPVRTVLELAGFKDVRAKSLGTNNAKNMVNAAINGLSQLKRAEEVAKLRGKSVEELLG.

An S5 DRBM domain is found at 13 to 76 (LKEQVVDIKR…EDAKKNLIHV (64 aa)).

Belongs to the universal ribosomal protein uS5 family. In terms of assembly, part of the 30S ribosomal subunit. Contacts proteins S4 and S8.

With S4 and S12 plays an important role in translational accuracy. Its function is as follows. Located at the back of the 30S subunit body where it stabilizes the conformation of the head with respect to the body. This is Small ribosomal subunit protein uS5 from Alkaliphilus oremlandii (strain OhILAs) (Clostridium oremlandii (strain OhILAs)).